We begin with the raw amino-acid sequence, 448 residues long: uncharacterized protein (448 aa).

An ATP-binding site is contributed by 257 to 264 (GRNAQGKT).

This is an uncharacterized protein from Methanocaldococcus jannaschii (strain ATCC 43067 / DSM 2661 / JAL-1 / JCM 10045 / NBRC 100440) (Methanococcus jannaschii).